The primary structure comprises 153 residues: uncharacterized protein (153 aa).

The segment at 16–40 (DEQTPLLNNDGIQRTPPSAEADMSL) is disordered. The segment covering 20–31 (PLLNNDGIQRTP) has biased composition (polar residues).

This is an uncharacterized protein from Schizosaccharomyces pombe (strain 972 / ATCC 24843) (Fission yeast).